The sequence spans 364 residues: Suberization-associated anionic peroxidase 1 (364 aa).

The first 25 residues, 1-25, serve as a signal peptide directing secretion; the sequence is MGFRLSHLSLALSFVALALAGVAIY. The N-linked (GlcNAc...) asparagine glycan is linked to Asn-36. Disulfide bonds link Cys-81/Cys-160 and Cys-112/Cys-117. His-110 functions as the Proton acceptor in the catalytic mechanism. 4 residues coordinate Ca(2+): Asp-111, Val-114, Gly-116, and Asp-118. N-linked (GlcNAc...) asparagine glycans are attached at residues Asn-127, Asn-162, and Asn-200. 2 disulfide bridges follow: Cys-167-Cys-353 and Cys-246-Cys-265. Pro-209 provides a ligand contact to substrate. Residues Asn-214 and Asn-226 are each glycosylated (N-linked (GlcNAc...) asparagine). His-239 is a binding site for heme b. Thr-240 contributes to the Ca(2+) binding site. A glycan (N-linked (GlcNAc...) asparagine) is linked at Asn-264. Residues Asp-278, Thr-280, and Asp-285 each coordinate Ca(2+).

Belongs to the peroxidase family. Classical plant (class III) peroxidase subfamily. Ca(2+) is required as a cofactor. Requires heme b as cofactor.

It localises to the secreted. It catalyses the reaction 2 a phenolic donor + H2O2 = 2 a phenolic radical donor + 2 H2O. Its function is as follows. Removal of H(2)O(2), oxidation of toxic reductants, biosynthesis and degradation of lignin, suberization, auxin catabolism, response to environmental stresses such as wounding, pathogen attack and oxidative stress. These functions might be dependent on each isozyme/isoform in each plant tissue. Functionally, suggested to catalyze the deposition of the aromatic residues of suberin on the cell wall and thus play a role in cell-suberization. The protein is Suberization-associated anionic peroxidase 1 (TAP1) of Solanum lycopersicum (Tomato).